The chain runs to 230 residues: uncharacterized protein (230 aa).

The S4 RNA-binding domain maps to 2-69 (HRLAKIISNA…KPRLWIYYKP (68 aa)). Asp102 (nucleophile) is an active-site residue.

This sequence belongs to the pseudouridine synthase RsuA family.

It carries out the reaction a uridine in RNA = a pseudouridine in RNA. This is an uncharacterized protein from Rickettsia conorii (strain ATCC VR-613 / Malish 7).